Here is a 695-residue protein sequence, read N- to C-terminus: uncharacterized protein (695 aa).

Disordered stretches follow at residues 1-112 and 242-262; these read MSRL…KHKK and MKKV…NNDH. The segment covering 32-47 has biased composition (low complexity); it reads DSSSSSDSPNFFPSSS. Over residues 96 to 107 the composition is skewed to basic and acidic residues; sequence KTEKEKEKEPIQ. Residues 278–492 form the tr-type G domain; the sequence is KPRTKLLLLG…KIDKEADTNH (215 aa). GTP contacts are provided by residues 287–294, 357–361, and 417–420; these read GPPKSGKK, IFTTN, and TKMD.

It belongs to the TRAFAC class translation factor GTPase superfamily. Classic translation factor GTPase family.

It localises to the cytoplasm. The protein localises to the nucleus. This is an uncharacterized protein from Schizosaccharomyces pombe (strain 972 / ATCC 24843) (Fission yeast).